The sequence spans 748 residues: Acyl-coenzyme A oxidase (748 aa).

The protein belongs to the acyl-CoA oxidase family. Homooctamer. Requires FAD as cofactor.

The protein localises to the peroxisome. The catalysed reaction is a 2,3-saturated acyl-CoA + O2 = a (2E)-enoyl-CoA + H2O2. The protein operates within lipid metabolism; peroxisomal fatty acid beta-oxidation. This chain is Acyl-coenzyme A oxidase (POX1), found in Saccharomyces cerevisiae (strain ATCC 204508 / S288c) (Baker's yeast).